Here is a 129-residue protein sequence, read N- to C-terminus: MAKPKRIGKKREKKNIPVGVVHIQASFNNTIITFTDPRGNTISWASSGQSGFKGSRKSTPFAAQVAAEQAARRAQDNGMRTVGIYVKGPGSGRESAMRAINAVGFKVAFIRDITPIPHNGCRPPKRRRV.

The protein belongs to the universal ribosomal protein uS11 family. As to quaternary structure, part of the 30S ribosomal subunit. Interacts with proteins S7 and S18. Binds to IF-3.

Its function is as follows. Located on the platform of the 30S subunit, it bridges several disparate RNA helices of the 16S rRNA. Forms part of the Shine-Dalgarno cleft in the 70S ribosome. This chain is Small ribosomal subunit protein uS11, found in Lawsonia intracellularis (strain PHE/MN1-00).